Consider the following 283-residue polypeptide: Cyclin-C (283 aa).

In terms of domain architecture, Cyclin N-terminal spans 46-144 (NVIQALGEHL…ILECEFYLLE (99 aa)). Residues 252-283 (TILSKMPKPKPPPNSEGEQGPNGSQNSSYSQS) are disordered. The span at 272-283 (PNGSQNSSYSQS) shows a compositional bias: polar residues.

The protein belongs to the cyclin family. Cyclin C subfamily. Component of the Mediator complex. The cylin/CDK pair formed by CCNC/CDK8 also associates with the large subunit of RNA polymerase II.

It is found in the nucleus. Its function is as follows. Component of the Mediator complex, a coactivator involved in regulated gene transcription of nearly all RNA polymerase II-dependent genes. Mediator functions as a bridge to convey information from gene-specific regulatory proteins to the basal RNA polymerase II transcription machinery. Mediator is recruited to promoters by direct interactions with regulatory proteins and serves as a scaffold for the assembly of a functional preinitiation complex with RNA polymerase II and the general transcription factors. Binds to and activates cyclin-dependent kinase CDK8 that phosphorylates the CTD (C-terminal domain) of the large subunit of RNA polymerase II (RNAp II), which may inhibit the formation of a transcription initiation complex. The protein is Cyclin-C (CCNC) of Gallus gallus (Chicken).